Here is a 259-residue protein sequence, read N- to C-terminus: MMLGVIGGSGFYTFFGSDARAVSVETPYGPPSAPITVGTVGDHEVAFLPRHGVKHEFSPHTVPYRANLWALRSLGVRRVFAPCAVGSLTPDLGPGSIVVPDQLVDRTSGRDDTYFDSGGIHVAFADPYCPTLRAAATGLPGVVDGGTMVVIQGPRFSTRAESRWFASQGFTLVNMTGYPEAVLARELEMCYAAVALVTDLDAGIEVGSGVRAVDVFAEFERNMPPFKKLVFEALEAVEVERTCTHCLTHSGVQLPFELP.

Phosphate-binding positions include Ser-9 and Arg-50–His-51. Met-175 contributes to the substrate binding site. Thr-176 provides a ligand contact to phosphate. Asp-199–Asp-201 lines the substrate pocket.

It belongs to the PNP/MTAP phosphorylase family. MTAP subfamily. As to quaternary structure, homohexamer. Dimer of a homotrimer.

The catalysed reaction is S-methyl-5'-thioadenosine + phosphate = 5-(methylsulfanyl)-alpha-D-ribose 1-phosphate + adenine. The protein operates within amino-acid biosynthesis; L-methionine biosynthesis via salvage pathway; S-methyl-5-thio-alpha-D-ribose 1-phosphate from S-methyl-5'-thioadenosine (phosphorylase route): step 1/1. Catalyzes the reversible phosphorylation of S-methyl-5'-thioadenosine (MTA) to adenine and 5-methylthioribose-1-phosphate. Involved in the breakdown of MTA, a major by-product of polyamine biosynthesis. Responsible for the first step in the methionine salvage pathway after MTA has been generated from S-adenosylmethionine. Has broad substrate specificity with 6-aminopurine nucleosides as preferred substrates. This is S-methyl-5'-thioadenosine phosphorylase from Mycolicibacterium smegmatis (strain ATCC 700084 / mc(2)155) (Mycobacterium smegmatis).